The chain runs to 349 residues: Glycerol-3-phosphate dehydrogenase [NAD(+)], cytoplasmic (349 aa).

NAD(+) is bound at residue 10 to 15 (GSGNWG). Lys120 is a substrate binding site. Ala153 contributes to the NAD(+) binding site. Phosphoserine is present on Ser154. Residue Lys204 is the Proton acceptor of the active site. NAD(+) is bound at residue Arg269. 269-270 (RN) provides a ligand contact to substrate. Lys289 is subject to N6-succinyllysine. NAD(+) contacts are provided by Lys296 and Gln298. The residue at position 326 (Tyr326) is a Phosphotyrosine.

Belongs to the NAD-dependent glycerol-3-phosphate dehydrogenase family. As to quaternary structure, homodimer.

It localises to the cytoplasm. It carries out the reaction sn-glycerol 3-phosphate + NAD(+) = dihydroxyacetone phosphate + NADH + H(+). In terms of biological role, has glycerol-3-phosphate dehydrogenase activity. This is Glycerol-3-phosphate dehydrogenase [NAD(+)], cytoplasmic (GPD1) from Pongo abelii (Sumatran orangutan).